The chain runs to 382 residues: Succinate--CoA ligase [ADP-forming] subunit beta (382 aa).

Residues 9–240 (KELFAKYGVK…PRDITEFEAY (232 aa)) form the ATP-grasp domain. ATP is bound by residues Lys45, 52-54 (GRG), Leu94, and Glu99. Mg(2+)-binding residues include Asn193 and Asp207. Residues Asn260 and 317–319 (GIT) contribute to the substrate site.

Belongs to the succinate/malate CoA ligase beta subunit family. As to quaternary structure, heterotetramer of two alpha and two beta subunits. Requires Mg(2+) as cofactor.

It catalyses the reaction succinate + ATP + CoA = succinyl-CoA + ADP + phosphate. It carries out the reaction GTP + succinate + CoA = succinyl-CoA + GDP + phosphate. It functions in the pathway carbohydrate metabolism; tricarboxylic acid cycle; succinate from succinyl-CoA (ligase route): step 1/1. Succinyl-CoA synthetase functions in the citric acid cycle (TCA), coupling the hydrolysis of succinyl-CoA to the synthesis of either ATP or GTP and thus represents the only step of substrate-level phosphorylation in the TCA. The beta subunit provides nucleotide specificity of the enzyme and binds the substrate succinate, while the binding sites for coenzyme A and phosphate are found in the alpha subunit. This is Succinate--CoA ligase [ADP-forming] subunit beta from Pyrobaculum calidifontis (strain DSM 21063 / JCM 11548 / VA1).